Consider the following 115-residue polypeptide: Large ribosomal subunit protein bL19 (115 aa).

This sequence belongs to the bacterial ribosomal protein bL19 family.

This protein is located at the 30S-50S ribosomal subunit interface and may play a role in the structure and function of the aminoacyl-tRNA binding site. This is Large ribosomal subunit protein bL19 from Yersinia pseudotuberculosis serotype O:1b (strain IP 31758).